A 221-amino-acid chain; its full sequence is Dynein light chain Tctex-type 4 (221 aa).

2 disordered regions span residues 1-52 and 65-87; these read MASR…SRRG and NSLVGPGAGPGGQRPSLGPVPPL. The span at 10 to 21 shows a compositional bias: basic and acidic residues; that stretch reads RQEEENAKDSGR. Position 66 is a phosphoserine (Ser-66).

It belongs to the dynein light chain Tctex-type family. As to quaternary structure, interacts with ENG/endoglin, TGFBR2 and TGFBR3. Interacts with PPP1CC. In terms of tissue distribution, ubiquitously expressed. Expressed in testis (at protein level).

The protein resides in the cell projection. The protein localises to the cilium. It localises to the flagellum. Its subcellular location is the cytoplasmic vesicle. It is found in the secretory vesicle. The protein resides in the acrosome. The protein localises to the cytoplasm. It localises to the cytoskeleton. Its subcellular location is the cilium axoneme. It is found in the nucleus. The protein resides in the microtubule organizing center. In Homo sapiens (Human), this protein is Dynein light chain Tctex-type 4.